Here is a 175-residue protein sequence, read N- to C-terminus: NADH-ubiquinone oxidoreductase chain 6 (175 aa).

A run of 5 helical transmembrane segments spans residues 1 to 21 (MMTY…VGFS), 25 to 45 (SPIY…GIIM), 47 to 67 (FGGS…MLVV), 88 to 108 (TVMG…LYVL), and 149 to 169 (YGAW…LVIL).

It belongs to the complex I subunit 6 family. In terms of assembly, core subunit of respiratory chain NADH dehydrogenase (Complex I) which is composed of 45 different subunits.

It localises to the mitochondrion inner membrane. The catalysed reaction is a ubiquinone + NADH + 5 H(+)(in) = a ubiquinol + NAD(+) + 4 H(+)(out). Core subunit of the mitochondrial membrane respiratory chain NADH dehydrogenase (Complex I) which catalyzes electron transfer from NADH through the respiratory chain, using ubiquinone as an electron acceptor. Essential for the catalytic activity and assembly of complex I. In Equus caballus (Horse), this protein is NADH-ubiquinone oxidoreductase chain 6 (MT-ND6).